Reading from the N-terminus, the 199-residue chain is Hematopoietic prostaglandin D synthase (199 aa).

The GST N-terminal domain maps to 2–79 (PNYKLLYFNM…YLTKNTDLAG (78 aa)). Residues tyrosine 8, arginine 14, tryptophan 39, 49–51 (GKI), and 63–64 (QS) each bind glutathione. A GST C-terminal domain is found at 81–199 (TELEQCQVDA…WILKRPQTKL (119 aa)).

Belongs to the GST superfamily. Sigma family. In terms of assembly, homodimer. Glutathione serves as cofactor. As to expression, highly expressed in spleen and bone marrow. Lower levels of expression in small intestine, colon, liver, pancreas and skin. Not detected in brain, heart, lung or kidney (at protein level).

The protein localises to the cytoplasm. It catalyses the reaction prostaglandin H2 = prostaglandin D2. The enzyme catalyses RX + glutathione = an S-substituted glutathione + a halide anion + H(+). It carries out the reaction 2-glyceryl-prostaglandin H2 = 2-glyceryl-prostaglandin D2. Functionally, bifunctional enzyme which catalyzes both the conversion of PGH2 to PGD2, a prostaglandin involved in smooth muscle contraction/relaxation and a potent inhibitor of platelet aggregation, and the conjugation of glutathione with a wide range of aryl halides and organic isothiocyanates. Also exhibits low glutathione-peroxidase activity towards cumene hydroperoxide. The sequence is that of Hematopoietic prostaglandin D synthase from Rattus norvegicus (Rat).